The chain runs to 699 residues: TBC1 domain family member 23 (699 aa).

Residues 44–225 (PLPADLRAKV…AIWDGYLQQA (182 aa)) form the Rab-GAP TBC domain. Position 300 is a phosphoserine (Ser-300). In terms of domain architecture, Rhodanese spans 334-446 (EGVRFFVVDC…LQQHLADINV (113 aa)). The span at 459 to 479 (STSGSRSSINSVDGESPNGSS) shows a compositional bias: polar residues. A disordered region spans residues 459–483 (STSGSRSSINSVDGESPNGSSDRGM). Residues Ser-469, Ser-474, and Ser-507 each carry the phosphoserine modification. Thr-514 is modified (phosphothreonine). The may mediate the interaction with C17orf75, FAM91A1 and WDR11 stretch occupies residues 514 to 573 (TPVDRMSFNLPWPDRSCTERHVSSSDRVGKPYRGVKPVFSIGDEEEYDTDEIDSSSMSDD). The tract at residues 514–699 (TPVDRMSFNL…IMKVLDALES (186 aa)) is may mediate the interaction with WASHC1. A phosphoserine mark is found at Ser-520 and Ser-571. The tract at residues 574-699 (DRKEVVNIQT…IMKVLDALES (126 aa)) is may mediate the interaction with FKBP15 and WASHC2; required for endosome to Golgi trafficking.

Directly interacts with GOLGA1 and GOLGA4. Interacts with FAM91A1, C17ORF75 and WDR11; the interaction recruits TBC1D23 to AP-1-derived vesicles. Directly interacts with WASHC1 and WASHC2A/FAM21A. Interacts with FKBP15. Isoform 1: Widely expressed, including in fetal adult brain (corpus callosum, pons, cerebellum), spinal cord, heart, skeletal muscle, thymus and bone marrow, and at lower levels in spleen. Hardly detected in liver, kidney, colon and testis. Isoform 2: Expressed at high levels in liver, kidney, colon and testis. Hardly detected in tissues expressing high levels of isoform 1. Expressed at low levels in spleen.

It localises to the golgi apparatus. The protein resides in the trans-Golgi network. The protein localises to the cytoplasmic vesicle. Putative Rab GTPase-activating protein which plays a role in vesicular trafficking. Involved in endosome-to-Golgi trafficking. Acts as a bridging protein by binding simultaneously to golgins, including GOLGA1 and GOLGA4, located at the trans-Golgi, and to the WASH complex, located on endosome-derived vesicles. Together with WDR11 complex facilitates the golgin-mediated capture of vesicles generated using AP-1. Plays a role in brain development, including in cortical neuron positioning. May also be important for neurite outgrowth, possibly through its involvement in membrane trafficking and cargo delivery, 2 processes that are essential for axonal and dendritic growth. May act as a general inhibitor of innate immunity signaling, strongly inhibiting multiple TLR and dectin/CLEC7A-signaling pathways. Does not alter initial activation events, but instead affects maintenance of inflammatory gene expression several hours after bacterial lipopolysaccharide (LPS) challenge. The polypeptide is TBC1 domain family member 23 (TBC1D23) (Homo sapiens (Human)).